The chain runs to 365 residues: Elongation factor Tu (365 aa).

Residues 1 to 7 (HVDHGKT), 62 to 66 (DCPGH), and 117 to 120 (NKCD) each bind GTP. The 185-residue stretch at 1 to 185 (HVDHGKTTLT…TLDSYIPTPE (185 aa)) folds into the tr-type G domain. Thr-7 contributes to the Mg(2+) binding site.

Belongs to the TRAFAC class translation factor GTPase superfamily. Classic translation factor GTPase family. EF-Tu/EF-1A subfamily. As to quaternary structure, monomer.

The protein localises to the cytoplasm. It carries out the reaction GTP + H2O = GDP + phosphate + H(+). Its function is as follows. GTP hydrolase that promotes the GTP-dependent binding of aminoacyl-tRNA to the A-site of ribosomes during protein biosynthesis. This Buchnera aphidicola subsp. Schlechtendalia chinensis protein is Elongation factor Tu.